Reading from the N-terminus, the 289-residue chain is MKLLVKAPAKINLSLDVLGKRQDGYHEVKMIMTTIDLADRLELMELAEDRIEILSHNRYVPDDQRNLAYQAAKLLKEKFNVKKGVSITIEKTIPVAAGLAGGSSDAAATLRGLNKLWNLGLTIDQLAELGAEIGSDVSFCVYGGTAIATGRGEQIEHIKTPPSCWVILAKPHIGVSTADVYGNLKLNRVTHPNVDKMVDVINAGDYKGICDTVGNVLEDVTFAMHPEVARIKAQMKRFGADAVLMSGSGPTVFGLVHHDSRMHRIYNGLKGFCEQVYAVRLLGERETLE.

Residue K10 is part of the active site. 94-104 serves as a coordination point for ATP; that stretch reads PVAAGLAGGSS. D136 is a catalytic residue.

Belongs to the GHMP kinase family. IspE subfamily.

The enzyme catalyses 4-CDP-2-C-methyl-D-erythritol + ATP = 4-CDP-2-C-methyl-D-erythritol 2-phosphate + ADP + H(+). Its pathway is isoprenoid biosynthesis; isopentenyl diphosphate biosynthesis via DXP pathway; isopentenyl diphosphate from 1-deoxy-D-xylulose 5-phosphate: step 3/6. In terms of biological role, catalyzes the phosphorylation of the position 2 hydroxy group of 4-diphosphocytidyl-2C-methyl-D-erythritol. This chain is 4-diphosphocytidyl-2-C-methyl-D-erythritol kinase, found in Bacillus anthracis (strain CDC 684 / NRRL 3495).